A 255-amino-acid polypeptide reads, in one-letter code: Proteasome subunit alpha (255 aa).

The segment at arginine 224–glycine 255 is disordered.

Belongs to the peptidase T1A family. In terms of assembly, the 20S proteasome core is composed of 14 alpha and 14 beta subunits that assemble into four stacked heptameric rings, resulting in a barrel-shaped structure. The two inner rings, each composed of seven catalytic beta subunits, are sandwiched by two outer rings, each composed of seven alpha subunits. The catalytic chamber with the active sites is on the inside of the barrel. Has a gated structure, the ends of the cylinder being occluded by the N-termini of the alpha-subunits. Is capped by the proteasome-associated ATPase, ARC.

The protein localises to the cytoplasm. The protein operates within protein degradation; proteasomal Pup-dependent pathway. Its activity is regulated as follows. The formation of the proteasomal ATPase ARC-20S proteasome complex, likely via the docking of the C-termini of ARC into the intersubunit pockets in the alpha-rings, may trigger opening of the gate for substrate entry. Interconversion between the open-gate and close-gate conformations leads to a dynamic regulation of the 20S proteasome proteolysis activity. Component of the proteasome core, a large protease complex with broad specificity involved in protein degradation. The polypeptide is Proteasome subunit alpha (Nocardioides sp. (strain ATCC BAA-499 / JS614)).